The primary structure comprises 262 residues: MLTLYSETFPSRLLLGTAAYPTPEILKQSVRTARPAMITVSLRRAGCGGEAHGQGFWSLLQETGVPVLPNTAGCQSVQEAVTTAQMAREVFETDWIKLELIGDDDTLQPDVFQLVEAAEILIKDGFKVLPYCTEDLIACRRLLDVGCQALMPWAAPIGTGLGAVHAYALNVLRERLPYTPLIIDAGLGLPSQAAQVMEWGFDGVLLNTAVSRSGDPVNMARAFALAVESGRLAFEAGPVEARDKAQASTPTVGQPFWHSAEY.

The Schiff-base intermediate with DXP role is filled by lysine 97. 1-deoxy-D-xylulose 5-phosphate contacts are provided by residues glycine 158, 185–186 (AG), and 207–208 (NT). Residues 243-262 (DKAQASTPTVGQPFWHSAEY) are disordered.

It belongs to the ThiG family. As to quaternary structure, homotetramer. Forms heterodimers with either ThiH or ThiS.

It is found in the cytoplasm. The enzyme catalyses [ThiS sulfur-carrier protein]-C-terminal-Gly-aminoethanethioate + 2-iminoacetate + 1-deoxy-D-xylulose 5-phosphate = [ThiS sulfur-carrier protein]-C-terminal Gly-Gly + 2-[(2R,5Z)-2-carboxy-4-methylthiazol-5(2H)-ylidene]ethyl phosphate + 2 H2O + H(+). Its pathway is cofactor biosynthesis; thiamine diphosphate biosynthesis. In terms of biological role, catalyzes the rearrangement of 1-deoxy-D-xylulose 5-phosphate (DXP) to produce the thiazole phosphate moiety of thiamine. Sulfur is provided by the thiocarboxylate moiety of the carrier protein ThiS. In vitro, sulfur can be provided by H(2)S. This Neisseria meningitidis serogroup C (strain 053442) protein is Thiazole synthase.